A 521-amino-acid polypeptide reads, in one-letter code: Formate--tetrahydrofolate ligase (521 aa).

It belongs to the formate--tetrahydrofolate ligase family.

The catalysed reaction is (6S)-5,6,7,8-tetrahydrofolate + formate + ATP = (6R)-10-formyltetrahydrofolate + ADP + phosphate. Its pathway is one-carbon metabolism; tetrahydrofolate interconversion. This is Formate--tetrahydrofolate ligase from Ureaplasma parvum serovar 3 (strain ATCC 700970).